The sequence spans 186 residues: ADP-ribosylation factor-like protein 6 (186 aa).

A lipid anchor (N-myristoyl glycine) is attached at Gly2. GTP is bound by residues 24–31 (GLDNSGKT), Thr50, 69–73 (DMSGQ), Gly72, 130–133 (NKMD), and Ala164. Thr50 contributes to the Mg(2+) binding site.

The protein belongs to the small GTPase superfamily. Arf family. In terms of assembly, interacts with SEC61B, ARL6IP1, ARL6IP2, ARL6IP3, ARL6IP4 ARL6IP5 and ARL6IP6. Interacts (GTP-bound form) with the BBSome a complex that contains BBS1, BBS2, BBS4, BBS5, BBS7, BBS8/TTC8, BBS9 and BBIP10. Interacts (GTP-free form) with IFT27. Most abundant in brain and kidney. Expressed in heart and eye. Isoform 2 is expressed only in the retina.

It localises to the cell projection. Its subcellular location is the cilium membrane. It is found in the cytoplasm. The protein resides in the cytoskeleton. The protein localises to the cilium axoneme. It localises to the cilium basal body. Involved in membrane protein trafficking at the base of the ciliary organelle. Mediates recruitment onto plasma membrane of the BBSome complex which would constitute a coat complex required for sorting of specific membrane proteins to the primary cilia. Together with BBS1, is necessary for correct trafficking of PKD1 to primary cilia. Together with the BBSome complex and LTZL1, controls SMO ciliary trafficking and contributes to the sonic hedgehog (SHH) pathway regulation. May regulate cilia assembly and disassembly and subsequent ciliary signaling events such as the Wnt signaling cascade. Isoform 2 may be required for proper retinal function and organization. The protein is ADP-ribosylation factor-like protein 6 (Arl6) of Mus musculus (Mouse).